Reading from the N-terminus, the 329-residue chain is Fructose-1,6-bisphosphatase class 1 (329 aa).

Mg(2+) is bound by residues Glu84, Asp103, Leu105, and Asp106. Substrate contacts are provided by residues 106–109 (DGSS), Asn196, and Lys262. Residue Glu268 participates in Mg(2+) binding.

It belongs to the FBPase class 1 family. Homotetramer. Mg(2+) serves as cofactor.

The protein localises to the cytoplasm. The catalysed reaction is beta-D-fructose 1,6-bisphosphate + H2O = beta-D-fructose 6-phosphate + phosphate. It participates in carbohydrate biosynthesis; gluconeogenesis. This is Fructose-1,6-bisphosphatase class 1 from Shewanella halifaxensis (strain HAW-EB4).